The sequence spans 322 residues: tRNA-modifying protein YgfZ (322 aa).

Trp-182 serves as a coordination point for folate.

This sequence belongs to the tRNA-modifying YgfZ family.

The protein localises to the cytoplasm. Functionally, folate-binding protein involved in regulating the level of ATP-DnaA and in the modification of some tRNAs. It is probably a key factor in regulatory networks that act via tRNA modification, such as initiation of chromosomal replication. This chain is tRNA-modifying protein YgfZ, found in Vibrio campbellii (strain ATCC BAA-1116).